The primary structure comprises 279 residues: Beta-lactamase (279 aa).

An N-terminal signal peptide occupies residues 1 to 21 (MRYVRLCVISLLATLPLVVYA). The active-site Acyl-ester intermediate is Ser-66. A disulfide bridge connects residues Cys-73 and Cys-119. Position 230 to 232 (230 to 232 (KTG)) interacts with substrate.

The protein belongs to the class-A beta-lactamase family.

It carries out the reaction a beta-lactam + H2O = a substituted beta-amino acid. The sequence is that of Beta-lactamase from Klebsiella pneumoniae.